The following is a 419-amino-acid chain: Carboxypeptidase A2 (419 aa).

The N-terminal stretch at 1-18 is a signal peptide; it reads MAMRLILFFGALFGHIYC. The propeptide at 19 to 114 is activation peptide; the sequence is LETFVGDQVL…EMLFNRRRER (96 aa). The Peptidase M14 domain occupies 122-414; that stretch reads AYHTLEEISQ…LGLKAIMEHV (293 aa). Positions 179 and 182 each coordinate Zn(2+). Residues 179 to 182, R237, and 254 to 255 each bind substrate; these read HARE and NR. C248 and C271 form a disulfide bridge. H306 is a Zn(2+) binding site. Residue 307 to 308 coordinates substrate; sequence SY. Residues C320 and C354 are joined by a disulfide bond. Position 358 (Y358) interacts with substrate. E380 (proton donor/acceptor) is an active-site residue.

It belongs to the peptidase M14 family. Zn(2+) serves as cofactor.

The protein localises to the secreted. The catalysed reaction is Similar to that of carboxypeptidase A (EC 3.4.17.1), but with a preference for bulkier C-terminal residues.. Carboxypeptidase that catalyzes the release of a C-terminal amino acid, with a preference for large aromatic C-terminal residues. The protein is Carboxypeptidase A2 (CPA2) of Homo sapiens (Human).